The primary structure comprises 283 residues: UPF0276 protein Nmul_A2550 (283 aa).

It belongs to the UPF0276 family.

This is UPF0276 protein Nmul_A2550 from Nitrosospira multiformis (strain ATCC 25196 / NCIMB 11849 / C 71).